Here is a 206-residue protein sequence, read N- to C-terminus: dCTP deaminase, dUMP-forming (206 aa).

Residues 117–122 (RSSFGR), Asp135, 143–145 (TLE), Gln163, Tyr177, Lys184, and Gln188 each bind dCTP. The Proton donor/acceptor role is filled by Glu145.

It belongs to the dCTP deaminase family. Homotrimer.

The catalysed reaction is dCTP + 2 H2O = dUMP + NH4(+) + diphosphate. It functions in the pathway pyrimidine metabolism; dUMP biosynthesis; dUMP from dCTP: step 1/1. Functionally, bifunctional enzyme that catalyzes both the deamination of dCTP to dUTP and the hydrolysis of dUTP to dUMP without releasing the toxic dUTP intermediate. This Methanococcus maripaludis (strain C5 / ATCC BAA-1333) protein is dCTP deaminase, dUMP-forming.